Here is a 96-residue protein sequence, read N- to C-terminus: UPF0235 protein YE3436 (96 aa).

The protein belongs to the UPF0235 family.

This is UPF0235 protein YE3436 from Yersinia enterocolitica serotype O:8 / biotype 1B (strain NCTC 13174 / 8081).